The following is an 859-amino-acid chain: Paladin (859 aa).

Residues 1-34 (MGTTASTAQQTVSAGTSLEGLQGGSSSSMDSQHS) are disordered. Glycine 2 is lipidated: N-myristoyl glycine. Serine 89 carries the phosphoserine modification.

It belongs to the paladin family. In terms of tissue distribution, vascular expression detected in the central nervous system, kidney, lung, heart, skeletal muscle, white adipose tissue (WAT), brown adipose tissue, liver, pancreas and spleen. Not expressed in all vessels: for instance, not expressed in capillaries in the brain, and expressed mainly in large vessels in the heart, WAT, liver, pancreas and kidney. Predominant nonvascular expression in myocardium and lung mesenchyme. In large vessels, primarily expressed by smooth muscle cells, but occasionally detected at low levels in the endothelium. Expressed in various cells of the hematopoietic lineage.

It is found in the cytoplasm. Its subcellular location is the cytosol. In Mus musculus (Mouse), this protein is Paladin (Pald1).